Here is a 634-residue protein sequence, read N- to C-terminus: Ankyrin repeat protein OPG025 (634 aa).

6 ANK repeats span residues Asp-36–Ile-69, Asn-70–Ser-100, Asn-103–Ser-134, Met-175–Tyr-211, Ile-307–Arg-337, and His-412–Ile-441.

Belongs to the orthopoxvirus OPG025 family. In terms of assembly, interacts with components of host SCF complex CUL1 and SKP1 and components of the cullin deneddylation/COP9 signalosome complex subunits COPS7A and COPS7B.

Functionally, plays a role in the inhibition of host immune repsonse by counteracting the action of interferons on early events in the viral replication cycle. The polypeptide is Ankyrin repeat protein OPG025 (OPG025) (Vaccinia virus (strain Copenhagen) (VACV)).